Here is a 69-residue protein sequence, read N- to C-terminus: Alternative ribosome-rescue factor A (69 aa).

The protein belongs to the alternative ribosome-rescue factor A family. In terms of assembly, interacts with the 70S ribosome and release factor 2.

Its function is as follows. Rescues ribosomes stalled at the 3' end of non-stop mRNAs. Recruits release factor 2 (RF2) to the stalled ribosome, helping position it correctly in the ribosomal A site so its GGQ motif can hydrolyze the peptidyl-tRNA bond. In Haemophilus influenzae (strain ATCC 51907 / DSM 11121 / KW20 / Rd), this protein is Alternative ribosome-rescue factor A (arfA).